We begin with the raw amino-acid sequence, 404 residues long: Probable tRNA sulfurtransferase (404 aa).

The region spanning 60–165 (QPVVEALKLV…DEAAYISYEE (106 aa)) is the THUMP domain. ATP is bound by residues 183–184 (ML), 208–209 (HF), arginine 265, glycine 287, and glutamine 296.

The protein belongs to the ThiI family.

Its subcellular location is the cytoplasm. It carries out the reaction [ThiI sulfur-carrier protein]-S-sulfanyl-L-cysteine + a uridine in tRNA + 2 reduced [2Fe-2S]-[ferredoxin] + ATP + H(+) = [ThiI sulfur-carrier protein]-L-cysteine + a 4-thiouridine in tRNA + 2 oxidized [2Fe-2S]-[ferredoxin] + AMP + diphosphate. The enzyme catalyses [ThiS sulfur-carrier protein]-C-terminal Gly-Gly-AMP + S-sulfanyl-L-cysteinyl-[cysteine desulfurase] + AH2 = [ThiS sulfur-carrier protein]-C-terminal-Gly-aminoethanethioate + L-cysteinyl-[cysteine desulfurase] + A + AMP + 2 H(+). It functions in the pathway cofactor biosynthesis; thiamine diphosphate biosynthesis. In terms of biological role, catalyzes the ATP-dependent transfer of a sulfur to tRNA to produce 4-thiouridine in position 8 of tRNAs, which functions as a near-UV photosensor. Also catalyzes the transfer of sulfur to the sulfur carrier protein ThiS, forming ThiS-thiocarboxylate. This is a step in the synthesis of thiazole, in the thiamine biosynthesis pathway. The sulfur is donated as persulfide by IscS. The protein is Probable tRNA sulfurtransferase of Streptococcus pyogenes serotype M6 (strain ATCC BAA-946 / MGAS10394).